Here is a 194-residue protein sequence, read N- to C-terminus: Adenylate kinase isoenzyme 1 (194 aa).

19–24 (GSGKGT) provides a ligand contact to ATP. The tract at residues 39–68 (STGDLLRAEVSSGSERGKKLQAIMEKGELV) is NMP. Residues T40, R45, 66–68 (ELV), 95–98 (GYPR), and Q102 each bind AMP. Residues 132–142 (KRGETSGRVDD) form an LID region. Residue R133 coordinates ATP. AMP-binding residues include R139 and R150. G178 lines the ATP pocket.

Belongs to the adenylate kinase family. AK1 subfamily. In terms of assembly, monomer. The cofactor is Mg(2+). Skeletal muscle.

It is found in the cytoplasm. The catalysed reaction is a ribonucleoside 5'-phosphate + ATP = a ribonucleoside 5'-diphosphate + ADP. The enzyme catalyses AMP + ATP = 2 ADP. It catalyses the reaction dAMP + ATP = dADP + ADP. It carries out the reaction dATP + AMP = dADP + ADP. The catalysed reaction is dAMP + dATP = 2 dADP. The enzyme catalyses a 2'-deoxyribonucleoside 5'-diphosphate + ATP = a 2'-deoxyribonucleoside 5'-triphosphate + ADP. It catalyses the reaction a ribonucleoside 5'-diphosphate + ATP = a ribonucleoside 5'-triphosphate + ADP. It carries out the reaction CDP + GTP = CTP + GDP. The catalysed reaction is GDP + ATP = GTP + ADP. The enzyme catalyses UDP + ATP = UTP + ADP. It catalyses the reaction GTP + UDP = UTP + GDP. It carries out the reaction dTDP + GTP = dTTP + GDP. The catalysed reaction is dCDP + GTP = dCTP + GDP. The enzyme catalyses dGDP + ATP = dGTP + ADP. It catalyses the reaction dADP + GTP = dATP + GDP. It carries out the reaction thiamine diphosphate + ADP = thiamine triphosphate + AMP. Functionally, catalyzes the reversible transfer of the terminal phosphate group between ATP and AMP. Also displays broad nucleoside diphosphate kinase activity. Plays an important role in cellular energy homeostasis and in adenine nucleotide metabolism. Also catalyzes at a very low rate the synthesis of thiamine triphosphate (ThTP) from thiamine diphosphate (ThDP) and ADP. The sequence is that of Adenylate kinase isoenzyme 1 from Gallus gallus (Chicken).